The following is a 97-amino-acid chain: Aspartyl/glutamyl-tRNA(Asn/Gln) amidotransferase subunit C (97 aa).

This sequence belongs to the GatC family. As to quaternary structure, heterotrimer of A, B and C subunits.

It catalyses the reaction L-glutamyl-tRNA(Gln) + L-glutamine + ATP + H2O = L-glutaminyl-tRNA(Gln) + L-glutamate + ADP + phosphate + H(+). The catalysed reaction is L-aspartyl-tRNA(Asn) + L-glutamine + ATP + H2O = L-asparaginyl-tRNA(Asn) + L-glutamate + ADP + phosphate + 2 H(+). Allows the formation of correctly charged Asn-tRNA(Asn) or Gln-tRNA(Gln) through the transamidation of misacylated Asp-tRNA(Asn) or Glu-tRNA(Gln) in organisms which lack either or both of asparaginyl-tRNA or glutaminyl-tRNA synthetases. The reaction takes place in the presence of glutamine and ATP through an activated phospho-Asp-tRNA(Asn) or phospho-Glu-tRNA(Gln). The protein is Aspartyl/glutamyl-tRNA(Asn/Gln) amidotransferase subunit C of Cyanothece sp. (strain PCC 7425 / ATCC 29141).